The primary structure comprises 109 residues: EPIDERMAL PATTERNING FACTOR-like protein 4 (109 aa).

Positions 1–26 (MGTFRRRRRFLLAALVTFALLHLFSA) are cleaved as a signal peptide. Disulfide bonds link cysteine 66–cysteine 100, cysteine 70–cysteine 76, and cysteine 73–cysteine 102.

This sequence belongs to the plant cysteine rich small secretory peptide family. Epidermal patterning factor subfamily. In terms of assembly, interacts with ERECTA. In terms of tissue distribution, expressed at the base of the apical meristem at 3 days after germination. Not detected in the hypocotyl. Expressed in developing stems soon after bolting, in inflorescence stems and in young siliques.

The protein resides in the secreted. Functionally, acts primarily as positive regulator of inflorescence growth. Endodermal expression is sufficient for proper inflorescence architecture. Redundantly involved with EPFL6 in procambial development regulation. Controls stomatal patterning. Mediates stomatal development inhibition. TMM (AC Q9SSD1) functions to dampen or block CLL2 signaling. Acts as a growth-regulatory ligand for ERECTA family receptors. This Arabidopsis thaliana (Mouse-ear cress) protein is EPIDERMAL PATTERNING FACTOR-like protein 4.